A 287-amino-acid polypeptide reads, in one-letter code: Large ribosomal subunit protein uL2 (287 aa).

The disordered stretch occupies residues 221 to 287 (RGSVMNPCDH…SKRSRGGRDS (67 aa)). Basic residues predominate over residues 271–287 (LRKRRKTSKRSRGGRDS).

The protein belongs to the universal ribosomal protein uL2 family. In terms of assembly, part of the 50S ribosomal subunit. Forms a bridge to the 30S subunit in the 70S ribosome.

Functionally, one of the primary rRNA binding proteins. Required for association of the 30S and 50S subunits to form the 70S ribosome, for tRNA binding and peptide bond formation. It has been suggested to have peptidyltransferase activity; this is somewhat controversial. Makes several contacts with the 16S rRNA in the 70S ribosome. In Synechococcus sp. (strain CC9605), this protein is Large ribosomal subunit protein uL2.